The following is a 644-amino-acid chain: Exoribonuclease 2 (644 aa).

The RNB domain maps to 189–516 (REDLTALDFV…NHRLLKAVIK (328 aa)). The region spanning 561–643 (DTRFAAEIVD…ETRSIIARPV (83 aa)) is the S1 motif domain.

The protein belongs to the RNR ribonuclease family. RNase II subfamily.

It is found in the cytoplasm. It carries out the reaction Exonucleolytic cleavage in the 3'- to 5'-direction to yield nucleoside 5'-phosphates.. Functionally, involved in mRNA degradation. Hydrolyzes single-stranded polyribonucleotides processively in the 3' to 5' direction. This is Exoribonuclease 2 from Escherichia coli O127:H6 (strain E2348/69 / EPEC).